A 311-amino-acid chain; its full sequence is Fucose-specific lectin (311 aa).

Repeat copies occupy residues 1 to 53 (MSTP…KNVI), 54 to 103 (AKAK…AGAK), 104 to 151 (FTVA…EGTN), 152 to 209 (LGVA…FDKA), 210 to 256 (PPRC…DKRT), and 257 to 311 (ITPV…PPAE). The tract at residues 1-311 (MSTPGAQEVL…LGRRALPPAE (311 aa)) is 6 X approximate tandem repeats. Residues Arg25, Glu37, Trp44, Arg73, Glu85, Trp94, Arg126, Glu138, Trp146, Arg177, Gln189, Trp198, Arg230, Gln242, Arg277, and Glu291 each contribute to the beta-L-fucose site.

It belongs to the fungal fucose-specific lectin family. In terms of assembly, homodimer.

In terms of biological role, lectin that specifically binds to L-fucose and weakly reacts with mannose and N-acetyl-neuraminic acid. Has strongest preference for the alpha-1,6-fucosylated chain (core fucose) on glycoproteins among alpha-1,2-, alpha-1,3-, alpha-1,4-, and alpha-1,6-fucosylated chains. Binds to fucose residues of IgE in mice and human, causing antigen-independent IgE-mediated mast cell activation and anaphylactoid reactions in mice and is possibly implicated in allergic response to Aspergillus oryzae in humans. Induces secretion of pro-inflammatory cytokines IL6 and IL8 implicated in ocular diseases such as mycotic keratitis, probably through its interaction with host toll-like receptors TLR2 and TLR4, followed by up-regulation of pro-inflammatory cytokines. This is Fucose-specific lectin from Aspergillus oryzae (strain ATCC 42149 / RIB 40) (Yellow koji mold).